A 193-amino-acid chain; its full sequence is Peptidyl-tRNA hydrolase (193 aa).

Y17 contributes to the tRNA binding site. Residue H22 is the Proton acceptor of the active site. 3 residues coordinate tRNA: Y68, N70, and N116.

Belongs to the PTH family. As to quaternary structure, monomer.

It is found in the cytoplasm. It carries out the reaction an N-acyl-L-alpha-aminoacyl-tRNA + H2O = an N-acyl-L-amino acid + a tRNA + H(+). In terms of biological role, hydrolyzes ribosome-free peptidyl-tRNAs (with 1 or more amino acids incorporated), which drop off the ribosome during protein synthesis, or as a result of ribosome stalling. Catalyzes the release of premature peptidyl moieties from peptidyl-tRNA molecules trapped in stalled 50S ribosomal subunits, and thus maintains levels of free tRNAs and 50S ribosomes. The chain is Peptidyl-tRNA hydrolase from Acinetobacter baumannii (strain AB0057).